We begin with the raw amino-acid sequence, 227 residues long: Orotidine 5'-phosphate decarboxylase (227 aa).

Substrate-binding positions include aspartate 8, lysine 30, aspartate 58–threonine 67, threonine 117, arginine 177, glutamine 186, glycine 206, and arginine 207. The active-site Proton donor is the lysine 60.

Belongs to the OMP decarboxylase family. Type 1 subfamily. Homodimer.

The catalysed reaction is orotidine 5'-phosphate + H(+) = UMP + CO2. It functions in the pathway pyrimidine metabolism; UMP biosynthesis via de novo pathway; UMP from orotate: step 2/2. Functionally, catalyzes the decarboxylation of orotidine 5'-monophosphate (OMP) to uridine 5'-monophosphate (UMP). In Campylobacter lari (strain RM2100 / D67 / ATCC BAA-1060), this protein is Orotidine 5'-phosphate decarboxylase.